The chain runs to 208 residues: ATP-dependent Clp protease proteolytic subunit (208 aa).

Residue Ser-112 is the Nucleophile of the active site. The active site involves His-137.

This sequence belongs to the peptidase S14 family. Fourteen ClpP subunits assemble into 2 heptameric rings which stack back to back to give a disk-like structure with a central cavity, resembling the structure of eukaryotic proteasomes.

Its subcellular location is the cytoplasm. It carries out the reaction Hydrolysis of proteins to small peptides in the presence of ATP and magnesium. alpha-casein is the usual test substrate. In the absence of ATP, only oligopeptides shorter than five residues are hydrolyzed (such as succinyl-Leu-Tyr-|-NHMec, and Leu-Tyr-Leu-|-Tyr-Trp, in which cleavage of the -Tyr-|-Leu- and -Tyr-|-Trp bonds also occurs).. Its function is as follows. Cleaves peptides in various proteins in a process that requires ATP hydrolysis. Has a chymotrypsin-like activity. Plays a major role in the degradation of misfolded proteins. This Buchnera aphidicola subsp. Acyrthosiphon pisum (strain APS) (Acyrthosiphon pisum symbiotic bacterium) protein is ATP-dependent Clp protease proteolytic subunit.